A 180-amino-acid chain; its full sequence is Adenine phosphoribosyltransferase (180 aa).

N-acetylalanine is present on alanine 2. Phosphoserine occurs at positions 15 and 30. Tyrosine 60 carries the post-translational modification Phosphotyrosine. Serine 66 carries the post-translational modification Phosphoserine. Threonine 135 carries the post-translational modification Phosphothreonine.

Belongs to the purine/pyrimidine phosphoribosyltransferase family. In terms of assembly, homodimer.

The protein resides in the cytoplasm. It catalyses the reaction AMP + diphosphate = 5-phospho-alpha-D-ribose 1-diphosphate + adenine. Its pathway is purine metabolism; AMP biosynthesis via salvage pathway; AMP from adenine: step 1/1. In terms of biological role, catalyzes a salvage reaction resulting in the formation of AMP, that is energically less costly than de novo synthesis. The chain is Adenine phosphoribosyltransferase from Bos taurus (Bovine).